The following is a 62-amino-acid chain: Photosystem II reaction center protein Z (62 aa).

The next 2 helical transmembrane spans lie at 8-28 (TLLAFIGLSLALVIGVPVLLA) and 41-61 (FSGSALWMLLVFVVGALNSFV).

Belongs to the PsbZ family. In terms of assembly, PSII is composed of 1 copy each of membrane proteins PsbA, PsbB, PsbC, PsbD, PsbE, PsbF, PsbH, PsbI, PsbJ, PsbK, PsbL, PsbM, PsbT, PsbY, PsbZ, Psb30/Ycf12, at least 3 peripheral proteins of the oxygen-evolving complex and a large number of cofactors. It forms dimeric complexes.

It localises to the plastid. Its subcellular location is the chloroplast thylakoid membrane. Its function is as follows. May control the interaction of photosystem II (PSII) cores with the light-harvesting antenna, regulates electron flow through the 2 photosystem reaction centers. PSII is a light-driven water plastoquinone oxidoreductase, using light energy to abstract electrons from H(2)O, generating a proton gradient subsequently used for ATP formation. This chain is Photosystem II reaction center protein Z, found in Ostreococcus tauri.